The primary structure comprises 617 residues: V-type proton ATPase catalytic subunit A (617 aa).

T136 carries the phosphothreonine modification. An ATP-binding site is contributed by 250–257 (GAFGCGKT). S384 bears the Phosphoserine; by AMPK mark.

This sequence belongs to the ATPase alpha/beta chains family. In terms of assembly, V-ATPase is a heteromultimeric enzyme made up of two complexes: the ATP-hydrolytic V1 complex and the proton translocation V0 complex. The V1 complex consists of three catalytic AB heterodimers that form a heterohexamer, three peripheral stalks each consisting of EG heterodimers, one central rotor including subunits D and F, and the regulatory subunits C and H. The proton translocation complex V0 consists of the proton transport subunit a, a ring of proteolipid subunits c9c'', rotary subunit d, subunits e and f, and the accessory subunits ATP6AP1/Ac45 and ATP6AP2/PRR. Interacts with the V0 complex V-ATPase subunit a4 ATP6V0A4. Interacts with WFS1. Interacts with alpha-crystallin B chain/CRYAB and with MTOR, forming a ternary complex. In terms of processing, phosphorylation at Ser-384 by AMPK down-regulates its enzyme activity. In terms of tissue distribution, expressed in brain (at protein level).

It is found in the cytoplasm. It localises to the cytosol. The protein resides in the cytoplasmic vesicle. Its subcellular location is the secretory vesicle. The protein localises to the clathrin-coated vesicle membrane. It is found in the lysosome. It carries out the reaction ATP + H2O + 4 H(+)(in) = ADP + phosphate + 5 H(+)(out). ATP hydrolysis occurs at the interface between the nucleotide-binding domains of subunits A and B. ATP hydrolysis triggers a conformational change in the subunits D and F, which induces a shift of subunit d. The c-ring is subsequently rotated and results in a continuous proton translocation across the membrane. The V-ATPase is inhibited by bafilomycin A. Catalytic subunit of the V1 complex of vacuolar(H+)-ATPase (V-ATPase), a multisubunit enzyme composed of a peripheral complex (V1) that hydrolyzes ATP and a membrane integral complex (V0) that translocates protons. V-ATPase is responsible for acidifying and maintaining the pH of intracellular compartments and in some cell types, is targeted to the plasma membrane, where it is responsible for acidifying the extracellular environment. In aerobic conditions, involved in intracellular iron homeostasis, thus triggering the activity of Fe(2+) prolyl hydroxylase (PHD) enzymes, and leading to HIF1A hydroxylation and subsequent proteasomal degradation. May play a role in neurite development and synaptic connectivity. The sequence is that of V-type proton ATPase catalytic subunit A (ATP6V1A) from Bos taurus (Bovine).